The sequence spans 311 residues: Pyrimidine-specific ribonucleoside hydrolase RihA (311 aa).

H240 is a catalytic residue.

It belongs to the IUNH family. RihA subfamily.

In terms of biological role, hydrolyzes with equal efficiency cytidine or uridine to ribose and cytosine or uracil, respectively. In Escherichia coli O45:K1 (strain S88 / ExPEC), this protein is Pyrimidine-specific ribonucleoside hydrolase RihA.